We begin with the raw amino-acid sequence, 294 residues long: Probable metallo-hydrolase BURPS1710b_2304 (294 aa).

Residues His68, His70, Asp72, His73, His143, Asp170, and His212 each coordinate a divalent metal cation.

It belongs to the metallo-beta-lactamase superfamily. The cofactor is a divalent metal cation.

Functionally, probable hydrolase. Does not have beta-lactamase activity. This chain is Probable metallo-hydrolase BURPS1710b_2304, found in Burkholderia pseudomallei (strain 1710b).